The primary structure comprises 220 residues: Large ribosomal subunit protein uL3 (220 aa).

The tract at residues 127–155 (FQGAIKRHGQSRGPMSHSSHFHRAPDSVG) is disordered.

This sequence belongs to the universal ribosomal protein uL3 family. In terms of assembly, part of the 50S ribosomal subunit. Forms a cluster with proteins L14 and L19.

In terms of biological role, one of the primary rRNA binding proteins, it binds directly near the 3'-end of the 23S rRNA, where it nucleates assembly of the 50S subunit. The chain is Large ribosomal subunit protein uL3 from Staphylococcus aureus (strain JH9).